Consider the following 322-residue polypeptide: ATP-dependent 6-phosphofructokinase (322 aa).

Residue glycine 11 coordinates ATP. 21 to 25 (RAVTR) contacts ADP. Residues 72 to 73 (RC) and 102 to 105 (GDGS) each bind ATP. Aspartate 103 contributes to the Mg(2+) binding site. 127–129 (TID) is a binding site for substrate. The active-site Proton acceptor is aspartate 129. Position 156 (arginine 156) interacts with ADP. Residues arginine 164 and 171-173 (MGR) each bind substrate. ADP-binding positions include 187–189 (GAE), arginine 213, and 215–217 (KKH). Substrate-binding positions include glutamate 224, arginine 245, and 251 to 254 (HIQR).

Belongs to the phosphofructokinase type A (PFKA) family. ATP-dependent PFK group I subfamily. Prokaryotic clade 'B1' sub-subfamily. In terms of assembly, homotetramer. Mg(2+) serves as cofactor.

It is found in the cytoplasm. The catalysed reaction is beta-D-fructose 6-phosphate + ATP = beta-D-fructose 1,6-bisphosphate + ADP + H(+). The protein operates within carbohydrate degradation; glycolysis; D-glyceraldehyde 3-phosphate and glycerone phosphate from D-glucose: step 3/4. Allosterically activated by ADP and other diphosphonucleosides, and allosterically inhibited by phosphoenolpyruvate. Its function is as follows. Catalyzes the phosphorylation of D-fructose 6-phosphate to fructose 1,6-bisphosphate by ATP, the first committing step of glycolysis. The polypeptide is ATP-dependent 6-phosphofructokinase (Staphylococcus epidermidis (strain ATCC 12228 / FDA PCI 1200)).